The following is a 158-amino-acid chain: Protein SREK1IP1 (158 aa).

Disordered regions lie at residues 1-20 (MAAP…RCGY) and 45-158 (SSTS…SDTD). The segment at 13–30 (AGCKRCGYPGHLTFECRN) adopts a CCHC-type zinc-finger fold. Basic and acidic residues predominate over residues 59–79 (ALSKEKIFGSHSKGSQEDSRK). Basic residues-rich tracts occupy residues 80–98 (EKHK…KKRS) and 111–140 (KKKK…KQKK). Positions 145 to 158 (SSSSDSSSESSDTD) are enriched in low complexity.

Possible splicing regulator involved in the control of cellular survival. This Danio rerio (Zebrafish) protein is Protein SREK1IP1 (srek1ip1).